We begin with the raw amino-acid sequence, 51 residues long: Large ribosomal subunit protein bL33 (51 aa).

It belongs to the bacterial ribosomal protein bL33 family.

In Pseudomonas putida (strain ATCC 47054 / DSM 6125 / CFBP 8728 / NCIMB 11950 / KT2440), this protein is Large ribosomal subunit protein bL33.